We begin with the raw amino-acid sequence, 187 residues long: Imidazoleglycerol-phosphate dehydratase (187 aa).

It belongs to the imidazoleglycerol-phosphate dehydratase family.

The protein resides in the cytoplasm. It carries out the reaction D-erythro-1-(imidazol-4-yl)glycerol 3-phosphate = 3-(imidazol-4-yl)-2-oxopropyl phosphate + H2O. It participates in amino-acid biosynthesis; L-histidine biosynthesis; L-histidine from 5-phospho-alpha-D-ribose 1-diphosphate: step 6/9. The polypeptide is Imidazoleglycerol-phosphate dehydratase (Pyrobaculum calidifontis (strain DSM 21063 / JCM 11548 / VA1)).